The following is a 141-amino-acid chain: Large ribosomal subunit protein uL11 (141 aa).

Belongs to the universal ribosomal protein uL11 family. As to quaternary structure, part of the ribosomal stalk of the 50S ribosomal subunit. Interacts with L10 and the large rRNA to form the base of the stalk. L10 forms an elongated spine to which L12 dimers bind in a sequential fashion forming a multimeric L10(L12)X complex. Post-translationally, one or more lysine residues are methylated.

In terms of biological role, forms part of the ribosomal stalk which helps the ribosome interact with GTP-bound translation factors. The polypeptide is Large ribosomal subunit protein uL11 (Picosynechococcus sp. (strain ATCC 27264 / PCC 7002 / PR-6) (Agmenellum quadruplicatum)).